The primary structure comprises 1159 residues: WASH complex subunit 5 (1159 aa).

Belongs to the strumpellin family. As to quaternary structure, component of the WASH core complex also described as WASH regulatory complex (SHRC) composed of WASH (WASHC1, WASH2P or WASH3P), WASHC2 (WASHC2A or WASHC2C), WASHC3, WASHC4 and WASHC5. The WASH core complex associates via WASHC2 with the F-actin-capping protein dimer (formed by CAPZA1, CAPZA2 or CAPZA3 and CAPZB) in a transient or substoichiometric manner which was initially described as WASH complex. Interacts with VCP, PI4K2A.

Its subcellular location is the cytoplasm. The protein resides in the cytosol. It is found in the endoplasmic reticulum. It localises to the early endosome. Functionally, acts as a component of the WASH core complex that functions as a nucleation-promoting factor (NPF) at the surface of endosomes, where it recruits and activates the Arp2/3 complex to induce actin polymerization, playing a key role in the fission of tubules that serve as transport intermediates during endosome sorting. May be involved in axonal outgrowth. Involved in cellular localization of ADRB2. Involved in cellular trafficking of BLOC-1 complex cargos such as ATP7A and VAMP7. Involved in cytokinesis and following polar body extrusion during oocyte meiotic maturation. This is WASH complex subunit 5 from Mus musculus (Mouse).